The chain runs to 299 residues: MATH domain and coiled-coil domain-containing protein At2g42460 (299 aa).

The MATH domain maps to 7–130 (QKTFTWKIEN…NNTLFIEVYI (124 aa)). Residues 225-262 (FRVKWLKSKLDEISLARKKKVDADAARVQELEGKVKNQ) are a coiled coil.

The protein is MATH domain and coiled-coil domain-containing protein At2g42460 of Arabidopsis thaliana (Mouse-ear cress).